A 398-amino-acid polypeptide reads, in one-letter code: 1-deoxy-D-xylulose 5-phosphate reductoisomerase (398 aa).

Threonine 11, glycine 12, serine 13, isoleucine 14, arginine 38, asparagine 39, and asparagine 125 together coordinate NADPH. Residue lysine 126 coordinates 1-deoxy-D-xylulose 5-phosphate. Glutamate 127 serves as a coordination point for NADPH. Aspartate 151 is a Mn(2+) binding site. 1-deoxy-D-xylulose 5-phosphate is bound by residues serine 152, glutamate 153, serine 179, and histidine 202. Glutamate 153 contributes to the Mn(2+) binding site. Residue glycine 208 coordinates NADPH. 1-deoxy-D-xylulose 5-phosphate-binding residues include serine 215, asparagine 220, lysine 221, and glutamate 224. A Mn(2+)-binding site is contributed by glutamate 224.

This sequence belongs to the DXR family. The cofactor is Mg(2+). Mn(2+) serves as cofactor.

The catalysed reaction is 2-C-methyl-D-erythritol 4-phosphate + NADP(+) = 1-deoxy-D-xylulose 5-phosphate + NADPH + H(+). It participates in isoprenoid biosynthesis; isopentenyl diphosphate biosynthesis via DXP pathway; isopentenyl diphosphate from 1-deoxy-D-xylulose 5-phosphate: step 1/6. Its function is as follows. Catalyzes the NADPH-dependent rearrangement and reduction of 1-deoxy-D-xylulose-5-phosphate (DXP) to 2-C-methyl-D-erythritol 4-phosphate (MEP). The sequence is that of 1-deoxy-D-xylulose 5-phosphate reductoisomerase from Burkholderia cenocepacia (strain HI2424).